Consider the following 356-residue polypeptide: Fructose-1,6-bisphosphatase class 1 (356 aa).

Positions 91, 113, 115, and 116 each coordinate Mg(2+). Substrate-binding positions include 116 to 119 (DGSS) and asparagine 208. Glutamate 280 serves as a coordination point for Mg(2+).

Belongs to the FBPase class 1 family. As to quaternary structure, homotetramer. Mg(2+) serves as cofactor.

Its subcellular location is the cytoplasm. It catalyses the reaction beta-D-fructose 1,6-bisphosphate + H2O = beta-D-fructose 6-phosphate + phosphate. Its pathway is carbohydrate biosynthesis; gluconeogenesis. This Methylacidiphilum infernorum (isolate V4) (Methylokorus infernorum (strain V4)) protein is Fructose-1,6-bisphosphatase class 1.